A 432-amino-acid polypeptide reads, in one-letter code: Enolase (432 aa).

(2R)-2-phosphoglycerate is bound at residue Gln-167. Glu-209 serves as the catalytic Proton donor. 3 residues coordinate Mg(2+): Asp-246, Glu-290, and Asp-317. Residues Lys-342, Arg-371, Ser-372, and Lys-393 each coordinate (2R)-2-phosphoglycerate. Residue Lys-342 is the Proton acceptor of the active site.

Belongs to the enolase family. In terms of assembly, component of the RNA degradosome, a multiprotein complex involved in RNA processing and mRNA degradation. Mg(2+) serves as cofactor.

It localises to the cytoplasm. It is found in the secreted. The protein localises to the cell surface. It carries out the reaction (2R)-2-phosphoglycerate = phosphoenolpyruvate + H2O. It functions in the pathway carbohydrate degradation; glycolysis; pyruvate from D-glyceraldehyde 3-phosphate: step 4/5. In terms of biological role, catalyzes the reversible conversion of 2-phosphoglycerate (2-PG) into phosphoenolpyruvate (PEP). It is essential for the degradation of carbohydrates via glycolysis. The polypeptide is Enolase (Escherichia coli O139:H28 (strain E24377A / ETEC)).